Reading from the N-terminus, the 177-residue chain is Large ribosomal subunit protein uL6 (177 aa).

The protein belongs to the universal ribosomal protein uL6 family. As to quaternary structure, part of the 50S ribosomal subunit.

In terms of biological role, this protein binds to the 23S rRNA, and is important in its secondary structure. It is located near the subunit interface in the base of the L7/L12 stalk, and near the tRNA binding site of the peptidyltransferase center. This Bordetella avium (strain 197N) protein is Large ribosomal subunit protein uL6.